A 138-amino-acid chain; its full sequence is Putative thioredoxin-like protein 453L (138 aa).

The 136-residue stretch at 3–138 (QQKYFEKPVY…FNNIVNYVMG (136 aa)) folds into the Thioredoxin domain. Catalysis depends on nucleophile residues C44 and C47. Residues C44 and C47 are joined by a disulfide bond.

The protein belongs to the thioredoxin family.

Functionally, participates in various redox reactions through the reversible oxidation of its active center dithiol to a disulfide and catalyzes dithiol-disulfide exchange reactions. This chain is Putative thioredoxin-like protein 453L, found in Acheta domesticus (House cricket).